Reading from the N-terminus, the 750-residue chain is Photosystem I P700 chlorophyll a apoprotein A1 (750 aa).

A run of 8 helical transmembrane segments spans residues 70–93, 156–179, 195–219, 291–309, 346–369, 385–411, 433–455, and 531–549; these read IFSA…FHGA, LYCT…FHYH, LNHH…HVSL, IAHH…GHMY, WHAQ…HHMY, LSLF…IFMV, AIIS…LYIH, and FLVH…LILL. [4Fe-4S] cluster-binding residues include C573 and C582. Transmembrane regions (helical) follow at residues 589 to 610 and 664 to 686; these read HVFL…HFSW and LSAY…MFLF. H675 provides a ligand contact to chlorophyll a'. M683 and Y691 together coordinate chlorophyll a. W692 contributes to the phylloquinone binding site. The helical transmembrane segment at 724 to 744 threads the bilayer; it reads AVGVTHYLLGGIATTWAFFLA.

This sequence belongs to the PsaA/PsaB family. In terms of assembly, the PsaA/B heterodimer binds the P700 chlorophyll special pair and subsequent electron acceptors. PSI consists of a core antenna complex that captures photons, and an electron transfer chain that converts photonic excitation into a charge separation. The eukaryotic PSI reaction center is composed of at least 11 subunits. P700 is a chlorophyll a/chlorophyll a' dimer, A0 is one or more chlorophyll a, A1 is one or both phylloquinones and FX is a shared 4Fe-4S iron-sulfur center. is required as a cofactor.

The protein resides in the plastid. It is found in the chloroplast thylakoid membrane. The enzyme catalyses reduced [plastocyanin] + hnu + oxidized [2Fe-2S]-[ferredoxin] = oxidized [plastocyanin] + reduced [2Fe-2S]-[ferredoxin]. PsaA and PsaB bind P700, the primary electron donor of photosystem I (PSI), as well as the electron acceptors A0, A1 and FX. PSI is a plastocyanin-ferredoxin oxidoreductase, converting photonic excitation into a charge separation, which transfers an electron from the donor P700 chlorophyll pair to the spectroscopically characterized acceptors A0, A1, FX, FA and FB in turn. Oxidized P700 is reduced on the lumenal side of the thylakoid membrane by plastocyanin. This is Photosystem I P700 chlorophyll a apoprotein A1 from Gossypium hirsutum (Upland cotton).